The primary structure comprises 235 residues: RAD9, HUS1, RAD1-interacting nuclear orphan protein 1 (235 aa).

S50 bears the Phosphoserine mark. Residues 54–60 carry the RAD1-binding motif motif; sequence SWVSPQF. Disordered regions lie at residues 75 to 106, 111 to 130, and 149 to 198; these read HRDQ…SETL, RVQP…VPLF, and VFAP…LVKD. The span at 96-106 shows a compositional bias: polar residues; sequence ESPQSSSSETL. Residues 123-130 carry the D-box motif; that stretch reads RRPLVPLF. Basic and acidic residues predominate over residues 161–173; the sequence is SVRDDPISPDQKE. Residues 171–175 carry the KEN box motif; that stretch reads QKENS.

Interacts (when phosphorylated by PLK1) with POLQ; promoting POLQ recruitment to DNA damage sites. Interacts with RAD1; interaction is direct and promotes association with the 9-1-1 (RAD9-RAD1-HUS1) complex. Interacts with RAD18. Interacts with TOPBP1. Interacts with UBE2N. Phosphorylated at Ser-50 by PLK1, promoting interaction with polymerase theta (POLQ). Post-translationally, ubiquitinated and degraded by the APC/C complex upon mitotic exit.

Its subcellular location is the nucleus. The protein localises to the chromosome. Its function is as follows. Involved in microhomology-mediated end-joining (MMEJ) DNA repair by promoting recruitment of polymerase theta (POLQ) to DNA damage sites during mitosis. MMEJ is an alternative non-homologous end-joining (NHEJ) machinery that takes place during mitosis to repair double-strand breaks in DNA that originate in S-phase. Accumulates in M-phase; following phosphorylation by PLK1, interacts with POLQ, enabling its recruitment to double-strand breaks for subsequent repair. Also involved in the DNA damage response (DDR) signaling in response to genotoxic stresses such as ionizing radiation (IR) during the S phase. Recruited to sites of DNA damage through interaction with the 9-1-1 cell-cycle checkpoint response complex and TOPBP1 in a ATR-dependent manner. Required for the progression of the G1 to S phase transition. Plays a role in the stimulation of CHEK1 phosphorylation. The protein is RAD9, HUS1, RAD1-interacting nuclear orphan protein 1 (Rhno1) of Mus musculus (Mouse).